Reading from the N-terminus, the 396-residue chain is Tryptophan synthase beta chain (396 aa).

Position 86 is an N6-(pyridoxal phosphate)lysine (Lys86).

This sequence belongs to the TrpB family. As to quaternary structure, tetramer of two alpha and two beta chains. It depends on pyridoxal 5'-phosphate as a cofactor.

The enzyme catalyses (1S,2R)-1-C-(indol-3-yl)glycerol 3-phosphate + L-serine = D-glyceraldehyde 3-phosphate + L-tryptophan + H2O. It participates in amino-acid biosynthesis; L-tryptophan biosynthesis; L-tryptophan from chorismate: step 5/5. Functionally, the beta subunit is responsible for the synthesis of L-tryptophan from indole and L-serine. The sequence is that of Tryptophan synthase beta chain from Francisella tularensis subsp. holarctica (strain FTNF002-00 / FTA).